A 284-amino-acid chain; its full sequence is Interferon antagonist OPG040 (284 aa).

ANK repeat units lie at residues 29 to 58 (HGHS…LKNL), 60 to 89 (ENEF…DDSQ), 93 to 122 (KGNT…RLMF), 127 to 157 (GWKT…TFDL), 159 to 188 (ILLS…STNT), and 193 to 222 (LFIP…NIYS).

Belongs to the orthopoxvirus OPG039 family.

It localises to the host cytoplasm. The protein localises to the host nucleus. Its function is as follows. Inhibits antiviral activity induced by type I interferons. Does not block signal transduction of IFN, but is important to counter the host antiviral state induced by a pre-treatment with IFN. Plays a role in the inhibition of host NF-kappa-B activation by preventing the acetylation of the RELA/p65 subunit of NF-kappaB. In Bos taurus (Bovine), this protein is Interferon antagonist OPG040 (OPG039).